A 271-amino-acid chain; its full sequence is Tryptophan synthase alpha chain (271 aa).

Active-site proton acceptor residues include Glu-49 and Asp-60.

Belongs to the TrpA family. Tetramer of two alpha and two beta chains.

The enzyme catalyses (1S,2R)-1-C-(indol-3-yl)glycerol 3-phosphate + L-serine = D-glyceraldehyde 3-phosphate + L-tryptophan + H2O. It functions in the pathway amino-acid biosynthesis; L-tryptophan biosynthesis; L-tryptophan from chorismate: step 5/5. Functionally, the alpha subunit is responsible for the aldol cleavage of indoleglycerol phosphate to indole and glyceraldehyde 3-phosphate. The protein is Tryptophan synthase alpha chain of Nitrosococcus oceani (strain ATCC 19707 / BCRC 17464 / JCM 30415 / NCIMB 11848 / C-107).